Reading from the N-terminus, the 282-residue chain is Casein kinase II subunit beta-2 (282 aa).

The disordered stretch occupies residues 1–92; the sequence is MYRERGMVGS…ESEVSGSDGE (92 aa). Positions 13–28 are enriched in basic and acidic residues; that stretch reads EVVDRKRINEIHDNRP. 2 stretches are compositionally biased toward polar residues: residues 29–47 and 61–71; these read SHSMSQPVNGKGKVTSTSV and RSGSISKTNIS. The segment covering 75–92 has biased composition (acidic residues); the sequence is DISDTDSEESEVSGSDGE.

The protein belongs to the casein kinase 2 subunit beta family. Heterotetramer of two catalytic alpha subunits and two regulatory beta subunits. Interacts with CCA1. In terms of processing, phosphorylated by alpha subunit.

The protein resides in the cytoplasm. It localises to the cytosol. Its subcellular location is the nucleus. Its function is as follows. Plays a complex role in regulating the basal catalytic activity of the alpha subunit. The tetrameric holoenzyme CK2, composed of two alpha and two beta subunits, phosphorylates the transcription factor PIF1 after an exposure to light, resulting in a proteasome-dependent degradation of PIF1 and promotion of photomorphogenesis. CK2 phosphorylates translation initiation factors. May participate in the regulation of the initiation of translation. The chain is Casein kinase II subunit beta-2 (CKB2) from Arabidopsis thaliana (Mouse-ear cress).